A 92-amino-acid chain; its full sequence is Co-chaperonin GroES (92 aa).

It belongs to the GroES chaperonin family. As to quaternary structure, heptamer of 7 subunits arranged in a ring. Interacts with the chaperonin GroEL.

It is found in the cytoplasm. Its function is as follows. Together with the chaperonin GroEL, plays an essential role in assisting protein folding. The GroEL-GroES system forms a nano-cage that allows encapsulation of the non-native substrate proteins and provides a physical environment optimized to promote and accelerate protein folding. GroES binds to the apical surface of the GroEL ring, thereby capping the opening of the GroEL channel. This Thermotoga maritima (strain ATCC 43589 / DSM 3109 / JCM 10099 / NBRC 100826 / MSB8) protein is Co-chaperonin GroES.